A 180-amino-acid chain; its full sequence is Isopentenyl-diphosphate Delta-isomerase (180 aa).

Residues H22 and H28 each coordinate Mn(2+). In terms of domain architecture, Nudix hydrolase spans L26–I160. The active site involves C62. C62 contributes to the Mg(2+) binding site. Residue H64 coordinates Mn(2+). E82 lines the Mg(2+) pocket. Residues E108 and E110 each contribute to the Mn(2+) site. The active site involves E110.

Belongs to the IPP isomerase type 1 family. Mg(2+) is required as a cofactor. Requires Mn(2+) as cofactor.

It is found in the cytoplasm. It carries out the reaction isopentenyl diphosphate = dimethylallyl diphosphate. Its pathway is isoprenoid biosynthesis; dimethylallyl diphosphate biosynthesis; dimethylallyl diphosphate from isopentenyl diphosphate: step 1/1. Functionally, catalyzes the 1,3-allylic rearrangement of the homoallylic substrate isopentenyl (IPP) to its highly electrophilic allylic isomer, dimethylallyl diphosphate (DMAPP). In Ruegeria pomeroyi (strain ATCC 700808 / DSM 15171 / DSS-3) (Silicibacter pomeroyi), this protein is Isopentenyl-diphosphate Delta-isomerase.